We begin with the raw amino-acid sequence, 1816 residues long: Kinesin-like protein KIF1B (1816 aa).

N-acetylserine is present on Ser2. The region spanning 5–354 (SVKVAVRVRP…LRYADRAKQI (350 aa)) is the Kinesin motor domain. 97 to 104 (GQTGAGKS) contacts ATP. The segment at 270–350 (NINKSLTTLG…TLSTLRYADR (81 aa)) is interaction with KIFBP. The interval 431–450 (FSTASMGSLTSSPSSCSLNS) is disordered. Over residues 432-450 (STASMGSLTSSPSSCSLNS) the composition is skewed to low complexity. A coiled-coil region spans residues 470 to 512 (GEEAIERLKESEKIIAELNETWEEKLRKTEAIRMEREALLAEM). Positions 556–612 (TRVGQADAERRQDIVLSGAHIKEEHCIFRSERNNTGEVIVTLEPCERSETYVNGKRV) constitute an FHA domain. A phosphothreonine mark is found at Thr647 and Thr652. Positions 672-731 (IDMKQEMEKRLQEMEILYKREKEEADLLLEQQRLDYESKLQALQKQVETRSLAAETTEEE) form a coiled coil. A phosphoserine mark is found at Ser1054, Ser1057, Ser1416, Ser1454, and Ser1487. The interval 1550-1570 (STTTFESAITPSESSGYDSAD) is disordered. 4 positions are modified to phosphoserine: Ser1573, Ser1603, Ser1610, and Ser1613. Positions 1620 to 1637 (SVSSFSSSTLTPSSTCPS) are enriched in low complexity. Positions 1620–1659 (SVSSFSSSTLTPSSTCPSLVDSRSSSMDQKTPEANSRASS) are disordered. Positions 1640 to 1659 (DSRSSSMDQKTPEANSRASS) are enriched in polar residues. One can recognise a PH domain in the interval 1701-1799 (VVSKKGYLHF…WLYAFNPLLA (99 aa)).

Belongs to the TRAFAC class myosin-kinesin ATPase superfamily. Kinesin family. Unc-104 subfamily. In terms of assembly, monomer. Interacts with KIFBP; positively regulates KIF1B microtubule motor activity. Interacts (via C-terminus end of the kinesin-motor domain) with CHP1; the interaction occurs in a calcium-dependent manner. Interacts with MADD (via death domain); links this isoform of KIF1B to Rab3-carrying vesicles in anterograde synaptic vesicle transport. In terms of tissue distribution, expressed in the brain with lower expression in testis and liver (at protein level). Strongly expressed in the brain and ovary, with lower expression in lung, kidney, uterus, testis and liver. As to expression, isoform 2 is expressed in non-neuronal tissues.

It is found in the cytoplasm. Its subcellular location is the cytoskeleton. It localises to the cytoplasmic vesicle. The protein resides in the secretory vesicle. The protein localises to the synaptic vesicle membrane. It is found in the lysosome. It catalyses the reaction ATP + H2O + a kinesin associated with a microtubule at position (n) = ADP + phosphate a kinesin associated with a microtubule at position (n+1, toward the plus end).. Its function is as follows. Has a plus-end-directed microtubule motor activity and functions as a motor for transport of vesicles and organelles along microtubules. In terms of biological role, has a plus-end-directed microtubule motor activity and functions as a motor for anterograde synaptic vesicle transport along axonal microtubules from the cell body to the presynapse in neuronal cells. Has a plus-end-directed microtubule motor activity and functions as a motor for the translocation of lysosomes from perinuclear regions to the cell periphery. This chain is Kinesin-like protein KIF1B, found in Rattus norvegicus (Rat).